A 1235-amino-acid chain; its full sequence is Phosphorylase b kinase regulatory subunit alpha, liver isoform (1235 aa).

3 positions are modified to phosphoserine: Ser-697, Ser-731, and Ser-737. The tract at residues Leu-808 to Leu-838 is calmodulin-binding. Low complexity predominate over residues Ser-976–His-986. Positions Ser-976 to Asn-1002 are disordered. A phosphoserine mark is found at Ser-984, Ser-1016, and Ser-1044. Residues Ala-1032–Ser-1053 are compositionally biased toward low complexity. Positions Ala-1032–Trp-1060 are disordered. The interval Ser-1059 to Ser-1099 is calmodulin-binding. Residue Cys-1232 is the site of S-farnesyl cysteine attachment.

Belongs to the phosphorylase b kinase regulatory chain family. In terms of assembly, hexadecamer of 4 heterotetramers, each composed of alpha, beta, gamma, and delta subunits. Alpha (PHKA1 or PHKA2) and beta (PHKB) are regulatory subunits, gamma (PHKG1 or PHKG2) is the catalytic subunit, and delta is calmodulin. Post-translationally, although the final Cys may be farnesylated, the terminal tripeptide is probably not removed, and the C-terminus is not methylated. As to expression, predominantly expressed in liver and other non-muscle tissues.

It is found in the cell membrane. It functions in the pathway glycan biosynthesis; glycogen metabolism. With respect to regulation, by phosphorylation of various serine residues and by calcium. Phosphorylase b kinase catalyzes the phosphorylation of serine in certain substrates, including troponin I. The alpha chain may bind calmodulin. The chain is Phosphorylase b kinase regulatory subunit alpha, liver isoform (PHKA2) from Oryctolagus cuniculus (Rabbit).